The sequence spans 89 residues: Small ribosomal subunit protein uS15 (89 aa).

It belongs to the universal ribosomal protein uS15 family. In terms of assembly, part of the 30S ribosomal subunit. Forms a bridge to the 50S subunit in the 70S ribosome, contacting the 23S rRNA.

Its function is as follows. One of the primary rRNA binding proteins, it binds directly to 16S rRNA where it helps nucleate assembly of the platform of the 30S subunit by binding and bridging several RNA helices of the 16S rRNA. Forms an intersubunit bridge (bridge B4) with the 23S rRNA of the 50S subunit in the ribosome. The sequence is that of Small ribosomal subunit protein uS15 from Pseudomonas savastanoi pv. phaseolicola (strain 1448A / Race 6) (Pseudomonas syringae pv. phaseolicola (strain 1448A / Race 6)).